The primary structure comprises 217 residues: Formate dehydrogenase, nitrate-inducible, cytochrome b556(Fdn) subunit (217 aa).

Residues 1-11 (MSKSKMIVRTK) lie on the Cytoplasmic side of the membrane. The helical transmembrane segment at 12–36 (FIDRACHWTVVICFFLVALSGISFF) threads the bilayer. His-18 is a binding site for heme b. The Periplasmic segment spans residues 37-52 (FPTLQWLTQTFGTPQM). A helical membrane pass occupies residues 53-74 (GRILHPFFGIAIFVALMFMFVR). His-57 lines the heme b pocket. The Cytoplasmic segment spans residues 75–110 (FVHHNIPDKKDIPWLLNIVEVLKGNEHKVADVGKYN). The chain crosses the membrane as a helical span at residues 111-134 (AGQKMMFWSIMSMIFVLLVTGVII). The Periplasmic portion of the chain corresponds to 135–150 (WRPYFAQYFPMQVVRY). Residues 151 to 175 (SLLIHAAAGIILIHAILIHMYMAFW) form a helical membrane-spanning segment. Heme b contacts are provided by His-155 and His-169. His-169 contacts a menaquinone. Over 176-217 (VKGSIKGMIEGKVSRRWAKKHHPRWYREIEKAEAKKESEEGI) the chain is Cytoplasmic.

It belongs to the formate dehydrogenase gamma subunit family. Trimer of heterotrimers, consisting of subunits alpha, beta and gamma. Requires heme as cofactor.

It localises to the cell inner membrane. Its function is as follows. Formate dehydrogenase allows the bacterium to use formate as major electron donor during anaerobic respiration, when nitrate is used as electron acceptor. Subunit gamma is the cytochrome b556 component of the formate dehydrogenase-N, and also contains a menaquinone reduction site that receives electrons from the beta subunit (FdnH), through its hemes. Formate dehydrogenase-N is part of a system that generates proton motive force, together with the dissimilatory nitrate reductase (Nar). The sequence is that of Formate dehydrogenase, nitrate-inducible, cytochrome b556(Fdn) subunit (fdnI) from Escherichia coli O157:H7.